The following is a 365-amino-acid chain: MLIYLFEWLSHYFKGLEVFSSYISVRIIMISITSLLITLALGRPMISWLQKMQIGQIVRDDGPQSHFSKRNTPTMGGVLILSSVIISCLLWGDLTSIYLWILILVVIFFGAIGFFDDYLKLVLKHPKGLRAKHKFALQSIFSIVLAIVLFYLLSKNGQMSLSIPFSKSLYIPMGIVIFVVLAFFIINGSSNAVNLTDGLDGLAIVPVVLVAAGLGIYAYIETNSTLANYLLFNYLGNPGLAEVAVFCAAVCGSGLAFLWFNSHPAEVFMGDVGSLTLGAVLGVIAVMVRQELIFFIMGLLFVVEALSVMLQVGSYKLRNGKRIFRMAPIHHHFELKGWPETKVVIRFWIISLILFLIGLAAIKVR.

10 consecutive transmembrane segments (helical) span residues 22 to 42 (YISV…LALG), 74 to 94 (TMGG…WGDL), 95 to 115 (TSIY…IGFF), 134 to 154 (KFAL…YLLS), 168 to 188 (SLYI…IING), 201 to 221 (GLAI…AYIE), 240 to 260 (LAEV…FLWF), 267 to 287 (VFMG…IAVM), 292 to 312 (LIFF…MLQV), and 342 to 362 (KVVI…LAAI).

Belongs to the glycosyltransferase 4 family. MraY subfamily. Requires Mg(2+) as cofactor.

It is found in the cell inner membrane. It carries out the reaction UDP-N-acetyl-alpha-D-muramoyl-L-alanyl-gamma-D-glutamyl-meso-2,6-diaminopimeloyl-D-alanyl-D-alanine + di-trans,octa-cis-undecaprenyl phosphate = di-trans,octa-cis-undecaprenyl diphospho-N-acetyl-alpha-D-muramoyl-L-alanyl-D-glutamyl-meso-2,6-diaminopimeloyl-D-alanyl-D-alanine + UMP. Its pathway is cell wall biogenesis; peptidoglycan biosynthesis. Its function is as follows. Catalyzes the initial step of the lipid cycle reactions in the biosynthesis of the cell wall peptidoglycan: transfers peptidoglycan precursor phospho-MurNAc-pentapeptide from UDP-MurNAc-pentapeptide onto the lipid carrier undecaprenyl phosphate, yielding undecaprenyl-pyrophosphoryl-MurNAc-pentapeptide, known as lipid I. This Francisella tularensis subsp. mediasiatica (strain FSC147) protein is Phospho-N-acetylmuramoyl-pentapeptide-transferase.